We begin with the raw amino-acid sequence, 203 residues long: Nucleoside triphosphate pyrophosphatase (203 aa).

Residue D78 is the Proton acceptor of the active site.

It belongs to the Maf family. A divalent metal cation serves as cofactor.

The protein localises to the cytoplasm. It carries out the reaction a ribonucleoside 5'-triphosphate + H2O = a ribonucleoside 5'-phosphate + diphosphate + H(+). The catalysed reaction is a 2'-deoxyribonucleoside 5'-triphosphate + H2O = a 2'-deoxyribonucleoside 5'-phosphate + diphosphate + H(+). In terms of biological role, nucleoside triphosphate pyrophosphatase. May have a dual role in cell division arrest and in preventing the incorporation of modified nucleotides into cellular nucleic acids. The protein is Nucleoside triphosphate pyrophosphatase of Prochlorococcus marinus (strain MIT 9301).